Here is a 264-residue protein sequence, read N- to C-terminus: Apolipoprotein A-I (264 aa).

The N-terminal stretch at 1 to 18 (MKAVVLAVAVLFLTGSQA) is a signal peptide. Repeat copies occupy residues 67-88 (LNLL…EQLG) and 89-110 (SVTK…QQMN). The 10 X approximate tandem repeats stretch occupies residues 67–264 (LNLLANWNTL…DQASKQLSAQ (198 aa)). M109 bears the Methionine sulfoxide mark. Residues 111–121 (KDLEEVKQKVQ) form a 3; half-length repeat. 5 repeat units span residues 122 to 142 (SYLD…RDKV), 144 to 165 (PLGK…EKLA), 166 to 187 (PLGQ…THLG), 188 to 208 (SYTQ…KESA), and 209 to 229 (PVSE…EKAK). M193 carries the post-translational modification Methionine sulfoxide. The 9; half-length repeat unit spans residues 230-240 (PALEDLRQGLM). Methionine sulfoxide is present on M240. Repeat unit 10 spans residues 241-264 (PVMESLKASFLSSIDQASKQLSAQ).

It belongs to the apolipoprotein A1/A4/E family. As to quaternary structure, homodimer. Interacts with APOA1BP and CLU. Component of a sperm activating protein complex (SPAP), consisting of APOA1, an immunoglobulin heavy chain, an immunoglobulin light chain and albumin. Interacts with NDRG1. Interacts with SCGB3A2. Interacts with NAXE and YJEFN3. Glycosylated. In terms of processing, palmitoylated. Post-translationally, phosphorylation sites are present in the extracellular medium. As to expression, major protein of plasma HDL, also found in chylomicrons.

The protein resides in the secreted. Participates in the reverse transport of cholesterol from tissues to the liver for excretion by promoting cholesterol efflux from tissues and by acting as a cofactor for the lecithin cholesterol acyltransferase (LCAT). As part of the SPAP complex, activates spermatozoa motility. The chain is Apolipoprotein A-I (Apoa1) from Heterocephalus glaber (Naked mole rat).